The primary structure comprises 968 residues: Probable histidine kinase 1 (968 aa).

2 coiled-coil regions span residues 89 to 120 (LLKE…FQDE) and 169 to 204 (KERA…QSHT). One can recognise a Histidine kinase domain in the interval 372 to 655 (TMSHEIRSPL…TFSFVLPCKI (284 aa)). Histidine 375 is subject to Phosphohistidine; by autocatalysis. The tract at residues 737–757 (STNSASTAHQSNGPSVSRTNK) is disordered. Polar residues predominate over residues 738–754 (TNSASTAHQSNGPSVSR). The Response regulatory domain maps to 818 to 965 (KILLVEDNKV…NIKECLQQYL (148 aa)). Residue aspartate 867 is modified to 4-aspartylphosphate.

Activation probably requires a transfer of a phosphate group between a His in the transmitter domain and an Asp of the receiver domain.

It catalyses the reaction ATP + protein L-histidine = ADP + protein N-phospho-L-histidine.. Functionally, cytokinin receptor related to bacterial two-component regulators. Functions as a histidine kinase and transmits the stress signal to a downstream MAPK cascade. This Oryza sativa subsp. indica (Rice) protein is Probable histidine kinase 1.